A 343-amino-acid chain; its full sequence is Tetraacyldisaccharide 4'-kinase (343 aa).

61–68 (GVGGNGKT) is a binding site for ATP.

The protein belongs to the LpxK family.

The enzyme catalyses a lipid A disaccharide + ATP = a lipid IVA + ADP + H(+). The protein operates within glycolipid biosynthesis; lipid IV(A) biosynthesis; lipid IV(A) from (3R)-3-hydroxytetradecanoyl-[acyl-carrier-protein] and UDP-N-acetyl-alpha-D-glucosamine: step 6/6. Its function is as follows. Transfers the gamma-phosphate of ATP to the 4'-position of a tetraacyldisaccharide 1-phosphate intermediate (termed DS-1-P) to form tetraacyldisaccharide 1,4'-bis-phosphate (lipid IVA). This Colwellia psychrerythraea (strain 34H / ATCC BAA-681) (Vibrio psychroerythus) protein is Tetraacyldisaccharide 4'-kinase.